A 411-amino-acid chain; its full sequence is LIM domain-binding protein 1 (411 aa).

At S2 the chain carries N-acetylserine. T61 bears the Phosphothreonine mark. Phosphoserine is present on residues S265 and S302. Disordered stretches follow at residues 284–330 (PPAE…TFAL) and 367–411 (DAAN…QASQ). Residues 302–318 (SGGSTMSSGGGNTNNSN) are compositionally biased toward low complexity. The region spanning 336-375 (DVMVVGEPTLMGGEFGDEDERLITRLENTQFDAANGIDDE) is the LIM interaction domain (LID) domain.

Belongs to the LDB family. As to quaternary structure, interacts with ESR1. Forms homodimers and heterodimers. Interacts with and activates LHX1/LIM1. Interacts with the LIM domains of ISL1 and LMO2. Can assemble in a complex with LMO2 and TAL1/SCL but does not interact with TAL1/SCL directly. Strongly interacts with the LIM2 domain of LMX1A and more weakly with the LIM1 domain. Homodimerization is not required for, and does not effect, LMX1A-binding. Component of a nuclear TAL-1 complex composed at least of CBFA2T3, LDB1, TAL1 and TCF3. Interacts with LHX6 and LHX9. At neuronal promoters, forms a complex with LHX3 involved in the specification of interneurons, in motor neurons, it is displaced by ISL1 to form a ternary complex in which ISL1 contacts both LHX3 and LDB1. Interacts with SLK; leading to negatively regulate SLK kinase activity. Interacts with YWHAZ. Interacts with PRDM1/BLIMP1. Interacts with LMO4. Interacts with RLIM/RNF12; the interaction inhibits the ubiquitination of LMO proteins. Ubiquitinated by RLIM/RNF12, leading to its degradation by the proteasome. As to expression, expressed in multiple adult tissues including heart, brain, liver, kidney, testis, lung and muscle, with expression highest in the pituitary gland and skin.

It is found in the nucleus. Binds to the LIM domain of a wide variety of LIM domain-containing transcription factors. May regulate the transcriptional activity of LIM-containing proteins by determining specific partner interactions. Plays a role in the development of interneurons and motor neurons in cooperation with LHX3 and ISL1. Acts synergistically with LHX1/LIM1 in axis formation and activation of gene expression. Acts with LMO2 in the regulation of red blood cell development, maintaining erythroid precursors in an immature state. The protein is LIM domain-binding protein 1 (Ldb1) of Mus musculus (Mouse).